The following is a 494-amino-acid chain: MNLNLSLEEVRKLSENYNVIPLYTELLVDTETPLSIFLKLKEKGQFNILLESAEGGEKWGRYSFIITGSSFYLRTRKDIGEIYERGKVNFFETKDPLSKIKEVVKKFIPYHDERLPRFWGGLVGYFAYDVVKFYEPVEDKNPDPIHTYDIYLVLTDVVVIHDNLTGKIKVVVPIFAQNGIEEEYERAKNLIRDTVKKLKERGTTFLNVVEKEPDFKNWRSNFTKEEFEDIVKKAKEYIAQGDVIQVVLSQRFRKRFKGNPDNIYRVLRFLNPSPYMYYLDFDQLKVIGSSPEILVRLEEGRIETRPIAGTRKRGRTEEEDKRLEEDLLSDEKERAEHLMLVDLARNDIGRVAKTGSVRVENFMRIERYSHVMHIVSDVVGELREGYDALDVLKATFPAGTVSGAPKVRAMQIIEELENERRGIYAGSVGYISFQGNMDMAIAIRTAVYRDRDIFVQAGAGIVADSVPEKEWEETVNKAKALMKAIEIAEESQEE.

L-tryptophan is bound by residues Ser-52 and 274 to 276; that span reads PYM. A chorismate-binding site is contributed by 309–310; it reads GT. Position 336 (Glu-336) interacts with Mg(2+). Residues Tyr-424, Arg-444, 458–460, and Gly-460 contribute to the chorismate site; that span reads GAG. Glu-473 contacts Mg(2+).

It belongs to the anthranilate synthase component I family. Heterotetramer consisting of two non-identical subunits: a beta subunit (TrpG) and a large alpha subunit (TrpE). The cofactor is Mg(2+).

It catalyses the reaction chorismate + L-glutamine = anthranilate + pyruvate + L-glutamate + H(+). It participates in amino-acid biosynthesis; L-tryptophan biosynthesis; L-tryptophan from chorismate: step 1/5. Its activity is regulated as follows. Feedback inhibited by tryptophan. Part of a heterotetrameric complex that catalyzes the two-step biosynthesis of anthranilate, an intermediate in the biosynthesis of L-tryptophan. In the first step, the glutamine-binding beta subunit (TrpG) of anthranilate synthase (AS) provides the glutamine amidotransferase activity which generates ammonia as a substrate that, along with chorismate, is used in the second step, catalyzed by the large alpha subunit of AS (TrpE) to produce anthranilate. In the absence of TrpG, TrpE can synthesize anthranilate directly from chorismate and high concentrations of ammonia. The protein is Anthranilate synthase component 1 (trpE) of Aquifex aeolicus (strain VF5).